A 248-amino-acid polypeptide reads, in one-letter code: Anamorsin homolog (248 aa).

Positions 4–129 (FKGLQKSLYI…ETGSSARLSF (126 aa)) are N-terminal SAM-like domain. The tract at residues 130–161 (AKKNASAVNVWKISGDDEELIDEEELLDEEDK) is linker. The [2Fe-2S] cluster site is built by Cys-172, Cys-181, Cys-184, and Cys-186. The segment at 172–186 (CSTTGKRKACKNCSC) is fe-S binding site A. [4Fe-4S] cluster is bound by residues Cys-209, Cys-212, Cys-220, and Cys-223. 2 consecutive short sequence motifs (cx2C motif) follow at residues 209–212 (CGNC) and 220–223 (CSTC). The segment at 209–223 (CGNCYLGDAFRCSTC) is fe-S binding site B.

The protein belongs to the anamorsin family. Monomer. [2Fe-2S] cluster serves as cofactor. The cofactor is [4Fe-4S] cluster.

It is found in the cytoplasm. The protein resides in the mitochondrion intermembrane space. Its function is as follows. Component of the cytosolic iron-sulfur (Fe-S) protein assembly (CIA) machinery. Required for the maturation of extramitochondrial Fe-S proteins. Part of an electron transfer chain functioning in an early step of cytosolic Fe-S biogenesis, facilitating the de novo assembly of a [4Fe-4S] cluster on the cytosolic Fe-S scaffold complex. Electrons are transferred from NADPH via a FAD- and FMN-containing diflavin oxidoreductase. Together with the diflavin oxidoreductase, also required for the assembly of the diferric tyrosyl radical cofactor of ribonucleotide reductase (RNR), probably by providing electrons for reduction during radical cofactor maturation in the catalytic small subunit. The protein is Anamorsin homolog of Drosophila melanogaster (Fruit fly).